Consider the following 205-residue polypeptide: Small ribosomal subunit protein uS4 (205 aa).

The disordered stretch occupies residues 26 to 46 (PVNRREYGPGQHGQRRKQKPS). The S4 RNA-binding domain occupies 94-157 (RRLDAVVYRL…KQLAIVLDAV (64 aa)).

This sequence belongs to the universal ribosomal protein uS4 family. As to quaternary structure, part of the 30S ribosomal subunit. Contacts protein S5. The interaction surface between S4 and S5 is involved in control of translational fidelity.

One of the primary rRNA binding proteins, it binds directly to 16S rRNA where it nucleates assembly of the body of the 30S subunit. In terms of biological role, with S5 and S12 plays an important role in translational accuracy. This is Small ribosomal subunit protein uS4 from Gluconobacter oxydans (strain 621H) (Gluconobacter suboxydans).